A 1382-amino-acid chain; its full sequence is MKASAVLAPGILALLFTLVQGNDGECQEALAKSEMNVNMKYQLPNFTAETPIQNVVLHEHHIYLGATNYIYVLNDKDLQKVSEYKTGPVLEHPECFPCQNCSNNANLSSGIWKDNINMALLVDRYYDDQLISCGSVNRGACQRHILPPDNPADIQSKVHCMFSPQADEEPSQCPDCVVSALGAKVLLSEKDRFINFFVGNTINSSYFPDHPLHSISVRRLKETQDGFKFLTDQSYIDVLPEFRDSYPIKYVHAFESNHFIYFLTVQKETLDAQTFHTRIIRFCSVDSGLHSYMEMPLECILTEKRRKRSTREEVFNILQAAYVSKPGAQLAKQIGASLNDDILFGVFAQSKPDSAEPMNRSAVCAFPIKYVNEFFNKIVNKNNVRCLQHFYGPHHEHCFNRTLLRNSSGCEVRRDEYRTEFTTAFQRVDLFMGQFNQVLLTSISTFIKGDLTIANLGTSEGRFMQVVVSRSGSSTPHVNFQLDSHPVSPEVIVEHPLNQNGYTLVVTGKKITKIPLNGLGCGHFQSCSQCLFAPSFVQCGWCHDKCVRSEECPSGIWTQEICLPAIHKVFPTSAPLEGGTMLTICGWDFGFRRNNKFDLKKTRVLLGNESCTLTLSESTTNMLKCTVGPAMNEHFNMSIIISHGRGTAQYSTFSYVDPVITSISPSYGPKAGGTLLTLTGKYLNSGNSRHISIGGKTCTLKSVSNSILECYTPAQIISTEFPVKLKIDLANRETSSFSYREDPIVHEIHPTKSFVSGGSTITGVGKNLNSVSVPRMVINVQEAGRNFTVACQHRSNSEIICCTTPSLQQLNLRLPLKTKAFFMLDGILSKYFDLIYVHNPVFKPFEKPVMISMGNENVLEIKGNDIDPEAVKGEVLKVGNKSCENIHSHSEAVLCTVPNDLLKLNSELNIEWKQAVSSTVLGKVIVQPDQNFTGLIVGVVSISIILLLLLGLFLWMKKRKQIKDLGSELVRYDARVHTPHLDRLVSARSVSPTTEMVSNESVDYRATFPEDQFPNSSQNGSCRQVQYPLTDLSPILTSGDSDISSPLLQNTVHIDLSALNPELVQAVQHVVIGPSSLIVHFNEVIGRGHFGCVYHGTLLDNDGKKIHCAVKSLNRITDIGEVSQFLTEGIIMKDFSHPNVLSLLGICLRSEGSPLVVLPYMKHGDLRNFIRNETHNPTVKDLIGFGLQVAKGMKYLASKKFVHRDLAARNCMLDEKFTVKVADFGLARDMYDKEYYSVHNKTGAKLPVKWMALESLQTQKFTTKSDVWSFGVLLWELMTRGAPPYPDVNTFDITVYLLQGRRLLQPEYCPDPLYEVMLKCWHPKAEMRPSFSELVSRISAIFSTFIGEHYVHVNATYVNVKCVAPYPSLLSSQDNVNGEVDT.

Residues 1 to 24 form the signal peptide; sequence MKASAVLAPGILALLFTLVQGNDG. The Extracellular segment spans residues 25–933; it reads ECQEALAKSE…VIVQPDQNFT (909 aa). Residues 27-516 enclose the Sema domain; sequence QEALAKSEMN…TGKKITKIPL (490 aa). Asn45, Asn100, and Asn106 each carry an N-linked (GlcNAc...) asparagine glycan. Disulfide bonds link Cys95/Cys101, Cys98/Cys160, Cys133/Cys141, and Cys173/Cys176. 2 N-linked (GlcNAc...) asparagine glycosylation sites follow: Asn203 and Asn359. Intrachain disulfides connect Cys299–Cys364 and Cys386–Cys398. N-linked (GlcNAc...) asparagine glycosylation is found at Asn400 and Asn406. 4 disulfide bridges follow: Cys521–Cys539, Cys527–Cys562, Cys530–Cys546, and Cys542–Cys552. IPT/TIG domains lie at 564–656, 658–740, and 743–837; these read PAIH…FSYV, PVIT…FSYR, and PIVH…LIYV. Thr583 is a glycosylation site (O-linked (Man) threonine). Asn608 and Asn636 each carry an N-linked (GlcNAc...) asparagine glycan. O-linked (Man) threonine glycans are attached at residues Thr677 and Thr762. N-linked (GlcNAc...) asparagine glycans are attached at residues Asn786, Asn880, and Asn931. A helical transmembrane segment spans residues 934–956; sequence GLIVGVVSISIILLLLLGLFLWM. The Cytoplasmic segment spans residues 957-1382; that stretch reads KKRKQIKDLG…QDNVNGEVDT (426 aa). Ser967 bears the Phosphoserine mark. Thr978 carries the phosphothreonine modification. Phosphoserine occurs at positions 991, 998, and 1001. A Phosphotyrosine modification is found at Tyr1004. A Protein kinase domain is found at 1079–1346; it reads VHFNEVIGRG…RISAIFSTFI (268 aa). Residues 1085–1093 and Lys1111 each bind ATP; that span reads IGRGHFGCV. Asp1205 serves as the catalytic Proton acceptor. Residues 1213–1382 are interaction with RANBP9; it reads LDEKFTVKVA…QDNVNGEVDT (170 aa). Residue Tyr1231 is modified to Phosphotyrosine. Phosphotyrosine; by autocatalysis occurs at positions 1235 and 1236. Phosphothreonine is present on Thr1290. The tract at residues 1321–1360 is interaction with MUC20; it reads WHPKAEMRPSFSELVSRISAIFSTFIGEHYVHVNATYVNV. 2 positions are modified to phosphotyrosine; by autocatalysis: Tyr1350 and Tyr1357. Tyr1366 is modified (phosphotyrosine).

It belongs to the protein kinase superfamily. Tyr protein kinase family. As to quaternary structure, heterodimer made of an alpha chain (50 kDa) and a beta chain (145 kDa) which are disulfide linked. Binds PLXNB1. Interacts when phosphorylated with downstream effectors including STAT3, PIK3R1, SRC, PCLG1, GRB2 and GAB1. Interacts with SPSB1, SPSB2 and SPSB4. Interacts with INPP5D/SHIP1. When phosphorylated at Tyr-1357, interacts with INPPL1/SHIP2. Interacts with RANBP9 and RANBP10, as well as SPSB1, SPSB2, SPSB3 and SPSB4. SPSB1 binding occurs in the presence and in the absence of HGF, however HGF treatment has a positive effect on this interaction. Interacts with MUC20; prevents interaction with GRB2 and suppresses hepatocyte growth factor-induced cell proliferation. Interacts with GRB10. Interacts with PTPN1 and PTPN2. Interacts with HSP90AA1 and HSP90AB1; the interaction suppresses MET kinase activity. Interacts with tensin TNS3. Interacts (when phosphorylated) with tensin TNS4 (via SH2 domain); the interaction increases MET protein stability by inhibiting MET endocytosis and subsequent lysosomal degradation. In terms of processing, autophosphorylated in response to ligand binding on Tyr-1235 and Tyr-1236 in the kinase domain leading to further phosphorylation of Tyr-1350 and Tyr-1357 in the C-terminal multifunctional docking site. Dephosphorylated by PTPRJ at Tyr-1350 and Tyr-1366. Dephosphorylated by PTPN1 and PTPN2. Post-translationally, ubiquitinated. Ubiquitination by CBL regulates the receptor stability and activity through proteasomal degradation. O-mannosylation of IPT/TIG domains by TMEM260 is required for protein maturation. O-mannosylated residues are composed of single mannose glycans that are not elongated or modified.

It is found in the membrane. The enzyme catalyses L-tyrosyl-[protein] + ATP = O-phospho-L-tyrosyl-[protein] + ADP + H(+). Its activity is regulated as follows. In its inactive state, the C-terminal tail interacts with the catalytic domain and inhibits the kinase activity. Upon ligand binding, the C-terminal tail is displaced and becomes phosphorylated, thus increasing the kinase activity. Receptor tyrosine kinase that transduces signals from the extracellular matrix into the cytoplasm by binding to hepatocyte growth factor/HGF ligand. Regulates many physiological processes including proliferation, scattering, morphogenesis and survival. Ligand binding at the cell surface induces autophosphorylation of MET on its intracellular domain that provides docking sites for downstream signaling molecules. Following activation by ligand, interacts with the PI3-kinase subunit PIK3R1, PLCG1, SRC, GRB2, STAT3 or the adapter GAB1. Recruitment of these downstream effectors by MET leads to the activation of several signaling cascades including the RAS-ERK, PI3 kinase-AKT, or PLCgamma-PKC. The RAS-ERK activation is associated with the morphogenetic effects while PI3K/AKT coordinates prosurvival effects. During embryonic development, MET signaling plays a role in gastrulation, development and migration of muscles and neuronal precursors, angiogenesis and kidney formation. In adults, participates in wound healing as well as organ regeneration and tissue remodeling. Also promotes differentiation and proliferation of hematopoietic cells. This Eulemur macaco macaco (Black lemur) protein is Hepatocyte growth factor receptor (MET).